A 92-amino-acid polypeptide reads, in one-letter code: Alpha-defensin 25 (92 aa).

An N-terminal signal peptide occupies residues 1–19 (MKTLVLLSALALLAFQVQA). Positions 20 to 57 (DPIQNRDEESKIDEQPGKEDQAVSVSFGDPEGSSLQEE) are excised as a propeptide. The segment covering 24-40 (NRDEESKIDEQPGKEDQ) has biased composition (basic and acidic residues). Positions 24–53 (NRDEESKIDEQPGKEDQAVSVSFGDPEGSS) are disordered. Disulfide bonds link Cys63–Cys92, Cys65–Cys80, and Cys70–Cys91.

This sequence belongs to the alpha-defensin family.

It is found in the secreted. May have microbicidal activities. This Mus musculus (Mouse) protein is Alpha-defensin 25 (Defa25).